Reading from the N-terminus, the 561-residue chain is Zinc finger protein 394 (561 aa).

A disordered region spans residues 1-61 (MNSSLTAQRR…NYPAASPDPE (61 aa)). Ser12 carries the phosphoserine modification. A Glycyl lysine isopeptide (Lys-Gly) (interchain with G-Cter in SUMO2) cross-link involves residue Lys40. The SCAN box domain maps to 64 to 146 (RLHFRQLRYQ…AVVRALQRAL (83 aa)). Residues 155–230 (VTFEDTAVSL…LQEAFQGKRP (76 aa)) form the KRAB domain. Residues 182 to 201 (ESAQKDSGSTVPPSLESRVE) form a disordered region. Residues Lys203 and Lys228 each participate in a glycyl lysine isopeptide (Lys-Gly) (interchain with G-Cter in SUMO2) cross-link. The segment at 231 to 285 (LFSKCGSTHEDRVEKQSGDPLPLKLENSPEAEGLNSISDVNKNGSIEGEDSKNNE) is disordered. A compositionally biased stretch (basic and acidic residues) spans 237-247 (STHEDRVEKQS). Residue Lys254 forms a Glycyl lysine isopeptide (Lys-Gly) (interchain with G-Cter in SUMO2) linkage. A compositionally biased stretch (polar residues) spans 265 to 274 (NSISDVNKNG). Lys282 is covalently cross-linked (Glycyl lysine isopeptide (Lys-Gly) (interchain with G-Cter in SUMO2)). 7 C2H2-type zinc fingers span residues 358–380 (YKCG…QRIH), 386–408 (YGCQ…QRTH), 414–436 (YTCL…QSTH), 442–463 (FKCE…QRLH), 469–491 (YKCE…HRIH), 497–519 (YGCS…QRIH), and 525–547 (YKCL…QRIH). Lys443 is covalently cross-linked (Glycyl lysine isopeptide (Lys-Gly) (interchain with G-Cter in SUMO2)).

It belongs to the krueppel C2H2-type zinc-finger protein family.

Its subcellular location is the nucleus. May be involved in transcriptional regulation. This Homo sapiens (Human) protein is Zinc finger protein 394 (ZNF394).